The following is a 447-amino-acid chain: Glutamate--tRNA ligase 1 (447 aa).

The short motif at 10–20 (PSPTGMLHVGN) is the 'HIGH' region element. Residues 240 to 244 (KISKR) carry the 'KMSKS' region motif. Lysine 243 serves as a coordination point for ATP.

The protein belongs to the class-I aminoacyl-tRNA synthetase family. Glutamate--tRNA ligase type 1 subfamily. In terms of assembly, monomer.

It is found in the cytoplasm. It catalyses the reaction tRNA(Glu) + L-glutamate + ATP = L-glutamyl-tRNA(Glu) + AMP + diphosphate. In terms of biological role, catalyzes the attachment of glutamate to tRNA(Glu) in a two-step reaction: glutamate is first activated by ATP to form Glu-AMP and then transferred to the acceptor end of tRNA(Glu). The chain is Glutamate--tRNA ligase 1 from Rickettsia conorii (strain ATCC VR-613 / Malish 7).